We begin with the raw amino-acid sequence, 732 residues long: Lanosterol synthase (732 aa).

Residue Thr-2 is modified to N-acetylthreonine. 7 PFTB repeats span residues 77 to 121 (ALNG…PLPA), 124 to 165 (REEI…RILG), 424 to 468 (PDNP…LLLQ), 483 to 528 (LCDA…MIDY), 560 to 600 (LTQG…ACMG), 612 to 653 (VSRA…HNTC), and 670 to 712 (QERG…NIFP). The active-site Proton donor is the Asp-455.

This sequence belongs to the terpene cyclase/mutase family. As to quaternary structure, monomer. In terms of tissue distribution, widely expressed. Expressed in the hair bulb, the outer root sheath and hair matrix of the hair follicle epithelium. Also detected in dermal papilla, epidermis, sweat glands, sebaceous glands, and blood vessels.

Its subcellular location is the endoplasmic reticulum membrane. It catalyses the reaction (S)-2,3-epoxysqualene = lanosterol. The protein operates within terpene metabolism; lanosterol biosynthesis; lanosterol from farnesyl diphosphate: step 3/3. Functionally, key enzyme in the cholesterol biosynthesis pathway. Catalyzes the cyclization of (S)-2,3 oxidosqualene to lanosterol, a reaction that forms the sterol nucleus. Through the production of lanosterol may regulate lens protein aggregation and increase transparency. The polypeptide is Lanosterol synthase (LSS) (Homo sapiens (Human)).